A 20-amino-acid polypeptide reads, in one-letter code: Endo-1,6-beta-glucanase (20 aa).

It belongs to the glycosyl hydrolase 5 (cellulase A) family.

Its subcellular location is the secreted. It localises to the extracellular space. It carries out the reaction Random hydrolysis of (1-&gt;6)-linkages in (1-&gt;6)-beta-D-glucans.. Endo-1,6-beta-glucanase that has highest activity against the beta-1,6-glucan pustulan. Also active against the beta-1,6-glucan lutean. Lower activity against laminarin (beta-1,3-glucan with beta-1,6-branches). Little or no activity against gentiobiose, yeast glucan, lichenin, scleroglucan, curdlan, barley glucan, CM cellulose, HE cellulose, pachyman and pullulan. The polypeptide is Endo-1,6-beta-glucanase (Acremonium sp).